Here is a 247-residue protein sequence, read N- to C-terminus: NAD(P)H-quinone oxidoreductase subunit K (247 aa).

Positions 63, 64, 128, and 159 each coordinate [4Fe-4S] cluster.

It belongs to the complex I 20 kDa subunit family. In terms of assembly, NDH-1 can be composed of about 15 different subunits; different subcomplexes with different compositions have been identified which probably have different functions. The cofactor is [4Fe-4S] cluster.

Its subcellular location is the cellular thylakoid membrane. The enzyme catalyses a plastoquinone + NADH + (n+1) H(+)(in) = a plastoquinol + NAD(+) + n H(+)(out). It catalyses the reaction a plastoquinone + NADPH + (n+1) H(+)(in) = a plastoquinol + NADP(+) + n H(+)(out). In terms of biological role, NDH-1 shuttles electrons from an unknown electron donor, via FMN and iron-sulfur (Fe-S) centers, to quinones in the respiratory and/or the photosynthetic chain. The immediate electron acceptor for the enzyme in this species is believed to be plastoquinone. Couples the redox reaction to proton translocation, and thus conserves the redox energy in a proton gradient. Cyanobacterial NDH-1 also plays a role in inorganic carbon-concentration. The polypeptide is NAD(P)H-quinone oxidoreductase subunit K (Microcystis aeruginosa (strain NIES-843 / IAM M-2473)).